Reading from the N-terminus, the 711-residue chain is Glycine--tRNA ligase beta subunit (711 aa).

Belongs to the class-II aminoacyl-tRNA synthetase family. Tetramer of two alpha and two beta subunits.

The protein localises to the cytoplasm. The enzyme catalyses tRNA(Gly) + glycine + ATP = glycyl-tRNA(Gly) + AMP + diphosphate. This Polaromonas naphthalenivorans (strain CJ2) protein is Glycine--tRNA ligase beta subunit.